The following is a 181-amino-acid chain: Acireductone dioxygenase (181 aa).

Fe(2+) is bound by residues His100, His102, Glu106, and His145. The Ni(2+) site is built by His100, His102, Glu106, and His145.

This sequence belongs to the acireductone dioxygenase (ARD) family. As to quaternary structure, monomer. Fe(2+) serves as cofactor. Requires Ni(2+) as cofactor.

The enzyme catalyses 1,2-dihydroxy-5-(methylsulfanyl)pent-1-en-3-one + O2 = 3-(methylsulfanyl)propanoate + CO + formate + 2 H(+). The catalysed reaction is 1,2-dihydroxy-5-(methylsulfanyl)pent-1-en-3-one + O2 = 4-methylsulfanyl-2-oxobutanoate + formate + 2 H(+). Its pathway is amino-acid biosynthesis; L-methionine biosynthesis via salvage pathway; L-methionine from S-methyl-5-thio-alpha-D-ribose 1-phosphate: step 5/6. Catalyzes 2 different reactions between oxygen and the acireductone 1,2-dihydroxy-3-keto-5-methylthiopentene (DHK-MTPene) depending upon the metal bound in the active site. Fe-containing acireductone dioxygenase (Fe-ARD) produces formate and 2-keto-4-methylthiobutyrate (KMTB), the alpha-ketoacid precursor of methionine in the methionine recycle pathway. Ni-containing acireductone dioxygenase (Ni-ARD) produces methylthiopropionate, carbon monoxide and formate, and does not lie on the methionine recycle pathway. In Trichodesmium erythraeum (strain IMS101), this protein is Acireductone dioxygenase.